The following is a 298-amino-acid chain: Small ribosomal subunit protein uS2 (298 aa).

Basic and acidic residues-rich tracts occupy residues 237-259 and 280-298; these read QSKE…DGQK and PKSE…ENKG. The tract at residues 237–298 is disordered; it reads QSKELDDKAD…DAAKLPENKG (62 aa).

It belongs to the universal ribosomal protein uS2 family.

The sequence is that of Small ribosomal subunit protein uS2 from Neorickettsia sennetsu (strain ATCC VR-367 / Miyayama) (Ehrlichia sennetsu).